The sequence spans 1221 residues: Fibulin-2 (1221 aa).

A signal peptide spans 1-26 (MLLQESAGVWLALALVTALTPSPSMA). Positions 27–176 (VPWQDCTGAE…ELICYQLPGC (150 aa)) are subdomain NA (Cys-rich). Residues 27–434 (VPWQDCTGAE…DGSTKDLIET (408 aa)) form a n region. The segment at 177 to 434 (HGNFSDAEEG…DGSTKDLIET (258 aa)) is subdomain NB (Cys-free). N-linked (GlcNAc...) asparagine glycosylation occurs at N179. Disordered stretches follow at residues 248–329 (PTAA…LIPD) and 341–399 (GAAP…PQHP). Over residues 270-283 (DTEEDEEEEEEETL) the composition is skewed to acidic residues. A compositionally biased stretch (basic and acidic residues) spans 312–322 (QEKEAEAKAGP). A Cell attachment site motif is present at residues 421 to 423 (RGD). 11 disulfides stabilise this stretch: C435–C462, C436–C469, C449–C470, C479–C508, C492–C509, C511–C535, C512–C542, C525–C543, C598–C610, C606–C619, and C621–C634. Anaphylatoxin-like domains follow at residues 435–477 (CCAA…LKEK), 478–510 (SCVA…QCCD), and 511–543 (CCGL…LSCC). The N-linked (GlcNAc...) asparagine glycan is linked to N497. In terms of domain architecture, EGF-like 1; calcium-binding spans 594–635 (DQDECLMLPGELCQHLCINTVGSYRCACFPGFELQGDGRTCR). A disordered region spans residues 633–661 (TCRPDRGAPQLDTARESAPRSESAQVSPN). A compositionally biased stretch (polar residues) spans 652–661 (RSESAQVSPN). The region spanning 669-708 (QPNTCKDNGPCRQVCRVVGDTAMCSCFPGYAIMADGVSCE) is the EGF-like 2 domain. Intrachain disulfides connect C673–C683, C679–C692, C694–C707, C713–C726, and C720–C735. In terms of domain architecture, EGF-like 3; calcium-binding spans 709–755 (DQDECLMGTHDCSWKQFCVNTLGSFYCVNHTVLCAEGYILNAHRKCV). An N-linked (GlcNAc...) asparagine glycan is attached at N737. The cysteines at positions 742 and 754 are disulfide-linked. In terms of domain architecture, EGF-like 4; calcium-binding spans 756–800 (DINECVTDLHTCTRAEHCVNTPGSFQCYKALTCEPGYVLTDGECT). Positions 801–846 (DVDECVTGTHNCQAGFSCQNTKGSFYCQARQRCMDGFLQDPEGNCV) constitute an EGF-like 5; calcium-binding domain. Disulfide bonds link C805–C818, C812–C827, and C833–C845. Positions 847–894 (DINECTSLLEPCRSGFSCINTVGSYTCQRNPLVCGRGYHANEEGSECV) constitute an EGF-like 6; calcium-binding domain. The EGF-like 7; calcium-binding domain maps to 895–937 (DVNECETGVHRCGEGQLCYNLPGSYRCDCKPGFQRDAFGRTCI). Disulfide bonds link C899-C912, C906-C921, C923-C936, C942-C954, C950-C963, C965-C978, C984-C993, C989-C1002, C1004-C1017, C1023-C1035, C1031-C1044, C1046-C1060, C1066-C1079, C1073-C1088, and C1093-C1105. One can recognise an EGF-like 8; calcium-binding domain in the interval 938–979 (DVNECWVSPGRLCQHTCENTPGSYRCSCAAGFLLAADGKHCE). One can recognise an EGF-like 9; calcium-binding domain in the interval 980–1018 (DVNECETRRCSQECANIYGSYQCYCRQGYQLAEDGHTCT). The EGF-like 10; calcium-binding domain maps to 1019–1061 (DIDECAQGAGILCTFRCVNVPGSYQCACPEQGYTMMANGRSCK). One can recognise an EGF-like 11; calcium-binding domain in the interval 1062–1106 (DLDECALGTHNCSEAETCHNIQGSFRCLRFDCPPNYVRVSETKCE). N1072 is a glycosylation site (N-linked (GlcNAc...) asparagine). The domain III stretch occupies residues 1111–1221 (QDITECQTSP…MYIFFTTFAP (111 aa)).

Belongs to the fibulin family. As to quaternary structure, homotrimer; disulfide-linked. Interacts with LAMA2. Interacts with FBN1 (via N-terminal domain). Forms a ternary complex with ELN and FBN1. As to expression, component of both basement membranes and other connective tissues.

It is found in the secreted. The protein localises to the extracellular space. Its subcellular location is the extracellular matrix. Its binding to fibronectin and some other ligands is calcium dependent. May act as an adapter that mediates the interaction between FBN1 and ELN. This is Fibulin-2 (Fbln2) from Mus musculus (Mouse).